A 1844-amino-acid polypeptide reads, in one-letter code: ATPase family AAA domain-containing protein 5 (1844 aa).

Residue serine 44 is modified to Phosphoserine. Lysine 127 is covalently cross-linked (Glycyl lysine isopeptide (Lys-Gly) (interchain with G-Cter in SUMO2)). A compositionally biased stretch (polar residues) spans glutamine 178–lysine 199. The interval glutamine 178–lysine 204 is disordered. 5 positions are modified to phosphoserine: serine 219, serine 306, serine 311, serine 354, and serine 369. The tract at residues lysine 368 to glutamate 384 is interaction with WDR48. Disordered stretches follow at residues lysine 477–asparagine 499, glutamate 580–leucine 623, and lysine 658–isoleucine 700. 2 stretches are compositionally biased toward polar residues: residues glutamate 580–lysine 592 and arginine 599–threonine 608. Phosphoserine is present on residues serine 602, serine 614, and serine 621. The span at threonine 664–asparagine 673 shows a compositional bias: basic residues. Positions glycine 685–isoleucine 700 are enriched in polar residues. The residue at position 817 (serine 817) is a Phosphoserine. 2 stretches are compositionally biased toward basic and acidic residues: residues leucine 987–lysine 1032 and arginine 1092–phenylalanine 1106. 2 disordered regions span residues leucine 987–serine 1047 and arginine 1092–aspartate 1118. Residue serine 1116 is modified to Phosphoserine. ATP is bound at residue glycine 1132–threonine 1139. Disordered regions lie at residues lysine 1203–lysine 1235 and isoleucine 1272–glutamate 1292. Over residues isoleucine 1272–valine 1285 the composition is skewed to polar residues. An LXCXE motif motif is present at residues leucine 1428–glutamate 1432. The interval serine 1591–glycine 1635 is disordered. Residues glutamate 1602–lysine 1624 are compositionally biased toward basic and acidic residues. An interaction with RAD51 and RFC5 region spans residues proline 1630–lysine 1719.

This sequence belongs to the AAA ATPase family. In terms of assembly, component of a heteropentameric replication factor ATAD5 RFC-like complex composed of one large subunit (ATAD5) and four small subunits (RFC2, RFC3, RFC4 and RFC5). Within the ATAD5 RFC-like complex, interacts with RFC2, RFC4 and RFC5. Within the ATAD5 RFC-like complex, interacts directly via-N terminal with RAD51; the interactions is enhanced under replication stress. Interacts with RB1 predominantly in G1 phase via its LXCXE motif. Interacts with RAD9A in growing cells. The interaction with RAD9A is reduced after exposure to DNA replication-inhibiting agents. Interacts with BRD4. Interacts with PCNA. Interacts with deubiquitinating enzyme USP1, and its associated factor, WDR48. Post-translationally, ATR may stimulate the RAD9A dissociation.

Its subcellular location is the nucleus. Its function is as follows. Has an important role in DNA replication and in maintaining genome integrity during replication stress. Involved in a RAD9A-related damage checkpoint, a pathway that is important in determining whether DNA damage is compatible with cell survival or whether it requires cell elimination by apoptosis. Modulates the RAD9A interaction with BCL2 and thereby induces DNA damage-induced apoptosis. Promotes PCNA deubiquitination by recruiting the ubiquitin-specific protease 1 (USP1) and WDR48 thereby down-regulating the error-prone damage bypass pathway. As component of the ATAD5 RFC-like complex, regulates the function of the DNA polymerase processivity factor PCNA by unloading the ring-shaped PCNA homotrimer from DNA after replication during the S phase of the cell cycle. This seems to be dependent on its ATPase activity. Plays important roles in restarting stalled replication forks under replication stress, by unloading the PCNA homotrimer from DNA and recruiting RAD51 possibly through an ATR-dependent manner. Ultimately this enables replication fork regression, breakage, and eventual fork restart. Both the PCNA unloading activity and the interaction with WDR48 are required to efficiently recruit RAD51 to stalled replication forks. Promotes the generation of MUS81-mediated single-stranded DNA-associated breaks in response to replication stress, which is an alternative pathway to restart stalled/regressed replication forks. The chain is ATPase family AAA domain-containing protein 5 from Homo sapiens (Human).